The sequence spans 108 residues: UPF0060 membrane protein Nham_2004 (108 aa).

The next 4 membrane-spanning stretches (helical) occupy residues 5-25, 31-51, 61-81, and 88-108; these read AAYVGAAVAEIAGCFAFWAWL, VWWLAPGMVSLALFAYLLTLV, AAYGGVYIIASLGWLWSVEGL, and LTGAAICLLGAAIILFGPRQI.

It belongs to the UPF0060 family.

The protein resides in the cell inner membrane. This is UPF0060 membrane protein Nham_2004 from Nitrobacter hamburgensis (strain DSM 10229 / NCIMB 13809 / X14).